Here is a 464-residue protein sequence, read N- to C-terminus: 3-isopropylmalate dehydratase large subunit (464 aa).

Cys345, Cys405, and Cys408 together coordinate [4Fe-4S] cluster.

The protein belongs to the aconitase/IPM isomerase family. LeuC type 1 subfamily. Heterodimer of LeuC and LeuD. The cofactor is [4Fe-4S] cluster.

The catalysed reaction is (2R,3S)-3-isopropylmalate = (2S)-2-isopropylmalate. It participates in amino-acid biosynthesis; L-leucine biosynthesis; L-leucine from 3-methyl-2-oxobutanoate: step 2/4. In terms of biological role, catalyzes the isomerization between 2-isopropylmalate and 3-isopropylmalate, via the formation of 2-isopropylmaleate. The protein is 3-isopropylmalate dehydratase large subunit of Flavobacterium johnsoniae (strain ATCC 17061 / DSM 2064 / JCM 8514 / BCRC 14874 / CCUG 350202 / NBRC 14942 / NCIMB 11054 / UW101) (Cytophaga johnsonae).